A 137-amino-acid chain; its full sequence is Urease subunit beta (137 aa).

The segment at 118–137 (IIAEENKVSENANKESGYNR) is disordered. Residues 126-137 (SENANKESGYNR) show a composition bias toward polar residues.

The protein belongs to the urease beta subunit family. In terms of assembly, heterotrimer of UreA (gamma), UreB (beta) and UreC (alpha) subunits. Three heterotrimers associate to form the active enzyme.

It localises to the cytoplasm. The enzyme catalyses urea + 2 H2O + H(+) = hydrogencarbonate + 2 NH4(+). The protein operates within nitrogen metabolism; urea degradation; CO(2) and NH(3) from urea (urease route): step 1/1. The sequence is that of Urease subunit beta from Staphylococcus xylosus.